The sequence spans 186 residues: MMSMDFEDFPVESAHRILTPRPTVMVTTVDEEGNINAAPFSFTMPVSIDPPVVAFASAPDHHTARNIESTHEFVINITPADIIERMWVTARDIPAGENELEAAGLAWTSSRRVKPPRIVEAPGHLECELLRMFEVGDHNLITGSVVSASVRSGAVKEGLLDVESVKPVLHVGGNKFVVGDHVRHVE.

It belongs to the flavoredoxin family. Homodimer. It depends on FMN as a cofactor.

This is Protein MTH_152 from Methanothermobacter thermautotrophicus (strain ATCC 29096 / DSM 1053 / JCM 10044 / NBRC 100330 / Delta H) (Methanobacterium thermoautotrophicum).